A 342-amino-acid chain; its full sequence is Holliday junction branch migration complex subunit RuvB (342 aa).

Residues 1-181 form a large ATPase domain (RuvB-L) region; it reads MENRMVTPFD…FGMLCAMEFY (181 aa). ATP-binding positions include leucine 20, arginine 21, glycine 62, lysine 65, threonine 66, threonine 67, 128 to 130, arginine 171, tyrosine 181, and arginine 218; that span reads EDY. Residue threonine 66 participates in Mg(2+) binding. Residues 182–252 form a small ATPAse domain (RuvB-S) region; that stretch reads TDEELMEIVV…GAKAALDLLE (71 aa). The interval 255-342 is head domain (RuvB-H); the sequence is KEGLDKIDNK…KDNQVSIFNK (88 aa). 2 residues coordinate DNA: arginine 310 and arginine 315.

Belongs to the RuvB family. Homohexamer. Forms an RuvA(8)-RuvB(12)-Holliday junction (HJ) complex. HJ DNA is sandwiched between 2 RuvA tetramers; dsDNA enters through RuvA and exits via RuvB. An RuvB hexamer assembles on each DNA strand where it exits the tetramer. Each RuvB hexamer is contacted by two RuvA subunits (via domain III) on 2 adjacent RuvB subunits; this complex drives branch migration. In the full resolvosome a probable DNA-RuvA(4)-RuvB(12)-RuvC(2) complex forms which resolves the HJ.

It localises to the cytoplasm. It catalyses the reaction ATP + H2O = ADP + phosphate + H(+). Functionally, the RuvA-RuvB-RuvC complex processes Holliday junction (HJ) DNA during genetic recombination and DNA repair, while the RuvA-RuvB complex plays an important role in the rescue of blocked DNA replication forks via replication fork reversal (RFR). RuvA specifically binds to HJ cruciform DNA, conferring on it an open structure. The RuvB hexamer acts as an ATP-dependent pump, pulling dsDNA into and through the RuvAB complex. RuvB forms 2 homohexamers on either side of HJ DNA bound by 1 or 2 RuvA tetramers; 4 subunits per hexamer contact DNA at a time. Coordinated motions by a converter formed by DNA-disengaged RuvB subunits stimulates ATP hydrolysis and nucleotide exchange. Immobilization of the converter enables RuvB to convert the ATP-contained energy into a lever motion, pulling 2 nucleotides of DNA out of the RuvA tetramer per ATP hydrolyzed, thus driving DNA branch migration. The RuvB motors rotate together with the DNA substrate, which together with the progressing nucleotide cycle form the mechanistic basis for DNA recombination by continuous HJ branch migration. Branch migration allows RuvC to scan DNA until it finds its consensus sequence, where it cleaves and resolves cruciform DNA. This Clostridium botulinum (strain Loch Maree / Type A3) protein is Holliday junction branch migration complex subunit RuvB.